The chain runs to 304 residues: Killer cell immunoglobulin-like receptor 2DS1 (304 aa).

The signal sequence occupies residues 1–21; sequence MSLTVVSMACVGFFLLQGAWP. The Extracellular segment spans residues 22 to 245; that stretch reads HEGVHRKPSL…SETGNPRHLH (224 aa). 2 Ig-like C2-type domains span residues 42–107 and 142–205; these read EETV…VTHS and GENV…FRDS. An intrachain disulfide couples Cys-49 to Cys-100. Asn-67, Asn-84, Asn-144, and Asn-178 each carry an N-linked (GlcNAc...) asparagine glycan. A disulfide bridge connects residues Cys-149 and Cys-198. Residues 220–239 form a disordered region; sequence VTGNPSNSWPSPTEPSSETG. Positions 223–239 are enriched in low complexity; sequence NPSNSWPSPTEPSSETG. A helical membrane pass occupies residues 246-264; the sequence is VLIGTSVVKIPFTILLFFL. At 265–304 the chain is on the cytoplasmic side; that stretch reads LHRWCSDKKNAAVMDQEPAGNRTVNSEDSDEQDHQEVSYA. Residues 280–304 form a disordered region; the sequence is QEPAGNRTVNSEDSDEQDHQEVSYA.

This sequence belongs to the immunoglobulin superfamily. In terms of assembly, interacts with the adapter protein TYROBP/DAP12; the interaction enhances KIR2DS1 stability at the cell surface. Expressed by NK cells.

The protein resides in the cell membrane. In terms of biological role, receptor on natural killer (NK) cells for some HLA-C alleles such as w6. Does not inhibit the activity of NK cells. The polypeptide is Killer cell immunoglobulin-like receptor 2DS1 (Homo sapiens (Human)).